The following is a 1704-amino-acid chain: Phospholipid-transporting ATPase ABCA3 (1704 aa).

Residue Asn14 is glycosylated (N-linked (GlcNAc...) asparagine). Residues 22-42 (VLVTVLELFLPLLFSGILIWL) traverse the membrane as a helical segment. 4 N-linked (GlcNAc...) asparagine glycosylation sites follow: Asn53, Asn124, Asn140, and Asn228. 5 consecutive transmembrane segments (helical) span residues 251–271 (ISDPFLIAIQYQLPLLLMLSF), 307–327 (AWFLMFLLFSLIVVSFMTLLF), 344–364 (SLVLAFLLCFAISSISFSFMV), 373–393 (MAATVGGFLYFFTYTPYFFVA), and 405–425 (LLSCLLSNVAMAMGAQLIGKF). Residues 530 to 763 (IKIKHLSKVF…YGAGYHMTLV (234 aa)) enclose the ABC transporter 1 domain. 566 to 573 (GHNGAGKT) serves as a coordination point for ATP. Residues Asn620 and Asn945 are each glycosylated (N-linked (GlcNAc...) asparagine). 6 helical membrane passes run 1100–1120 (IALNLLIAMAFLASTFSILAV), 1144–1164 (SALLWDLISFLVPSLLLLVVF), 1183–1203 (LLLMLYGWAIIPLMYLLSFFF), 1213–1233 (LTIFNILSGIATFIVVTIMRI), 1245–1265 (LDHVFLVLPNHCLGMAVSNFY), and 1310–1330 (MAASGGIYLTLLFLIETNLLW). N-linked (GlcNAc...) asparagine glycosylation is present at Asn1350. Residues 1381–1614 (LIINELSKVY…FGSGYSLQAK (234 aa)) enclose the ABC transporter 2 domain. Residue 1416–1423 (GFNGAGKT) participates in ATP binding.

As to quaternary structure, homooligomer; disulfide-linked. N-glycosylated. Localization at intracellular vesicles is accompanied by processing of oligosaccharide from high mannose type to complex type. N-linked glycosylation at Asn-124 and Asn-140 is required for stability and efficient anterograde trafficking and prevents from proteasomal degradation. In terms of processing, proteolytically cleaved by CTSL and to a lower extent by CTSB within multivesicular bodies (MVB) and lamellar bodies (LB) leading to a mature form of 150 kDa. As to expression, highly expressed in lung, moderately expressed in stomach, intestine, and kidney and weakly expressed in thyroid, brain, liver, spleen, heart, testis, and thymus.

It is found in the endosome. The protein localises to the multivesicular body membrane. It localises to the cytoplasmic vesicle membrane. The protein resides in the late endosome membrane. Its subcellular location is the lysosome membrane. It catalyses the reaction ATP + H2O + xenobioticSide 1 = ADP + phosphate + xenobioticSide 2.. The enzyme catalyses a 1,2-diacyl-sn-glycero-3-phosphocholine(in) + ATP + H2O = a 1,2-diacyl-sn-glycero-3-phosphocholine(out) + ADP + phosphate + H(+). The catalysed reaction is ATP + H2O + phospholipidSide 1 = ADP + phosphate + phospholipidSide 2.. It carries out the reaction 1,2-dihexadecanoyl-sn-glycero-3-phosphocholine(in) + ATP + H2O = 1,2-dihexadecanoyl-sn-glycero-3-phosphocholine(out) + ADP + phosphate + H(+). It catalyses the reaction cholesterol(in) + ATP + H2O = cholesterol(out) + ADP + phosphate + H(+). The enzyme catalyses a 1,2-diacyl-sn-glycero-3-phospho-(1'-sn-glycerol)(in) + ATP + H2O = a 1,2-diacyl-sn-glycero-3-phospho-(1'-sn-glycerol)(out) + ADP + phosphate + H(+). Functionally, catalyzes the ATP-dependent transport of phospholipids such as phosphatidylcholine and phosphoglycerol from the cytoplasm into the lumen side of lamellar bodies, in turn participates in the lamellar bodies biogenesis and homeostasis of pulmonary surfactant. Transports preferentially phosphatidylcholine containing short acyl chains. In addition plays a role as an efflux transporter of miltefosine across macrophage membranes and free cholesterol (FC) through intralumenal vesicles by removing FC from the cell as a component of surfactant and protects cells from free cholesterol toxicity. The polypeptide is Phospholipid-transporting ATPase ABCA3 (Rattus norvegicus (Rat)).